The sequence spans 407 residues: Inactive non-canonical poly(A) RNA polymerase protein Trf4-2 (407 aa).

Residues Asp-85 and Asp-87 each coordinate Mg(2+). One can recognise a PAP-associated domain in the interval 221-280 (LALLLIQFLDYYGRKFDFFKYGISVLGQGGCVEKARLRSTLGENNWQSVLCIEDPVTPTN). The interval 354-390 (LVQPSPTGSTSPSASASASEDERSGGPATIGFGRCDD) is disordered. Positions 357–371 (PSPTGSTSPSASASA) are enriched in low complexity.

It belongs to the DNA polymerase type-B-like family.

This Drosophila melanogaster (Fruit fly) protein is Inactive non-canonical poly(A) RNA polymerase protein Trf4-2.